The chain runs to 854 residues: Periodic tryptophan protein 2 homolog (854 aa).

13 WD repeats span residues 9–52 (NLVG…TFPF), 53–93 (ENHK…LHYF), 94–132 (NFKS…EERE), 144–183 (GHFD…GFHP), 188–227 (GHKN…QAGE), 252–291 (NQNS…MLYQ), 294–334 (ITQS…YVLK), 337–376 (SHYD…CIVT), 379–418 (QHTS…NFRT), 422–464 (PSRV…ETLA), 465–504 (GHEG…GIVE), 507–546 (PIPS…QTSL), and 569–608 (SLNK…LIKK). A Phosphothreonine modification is found at Thr640. Phosphoserine is present on Ser645. A WD 14 repeat occupies 668-709 (TRPEIICHGVQFSPSGGAFAAATTEGLMIYSLYNDFLFDPIN).

It belongs to the WD repeat PWP2 family.

The polypeptide is Periodic tryptophan protein 2 homolog (Schizosaccharomyces pombe (strain 972 / ATCC 24843) (Fission yeast)).